The primary structure comprises 572 residues: Mitochondrial chaperone TCM62 (572 aa).

A mitochondrion-targeting transit peptide spans 1 to 16 (MLRNCLRKLGNHQTKC). Residues 17–471 (SVKTLHTPIY…KANEPNFMTK (455 aa)) are Mitochondrial matrix-facing. The helical transmembrane segment at 472–488 (VGINAVLSAVILPSEVA) threads the bilayer. Residues 489–572 (FKNAYGYNYY…VYKKPERHKA (84 aa)) lie on the Mitochondrial intermembrane side of the membrane.

This sequence belongs to the chaperonin (HSP60) family. Forms a high molecular mass protein complex of approximately 850 kDa.

The protein resides in the mitochondrion inner membrane. Its function is as follows. Chaperone. Required for the assembly of succinate dehydrogenase subunits. Ensures mitochondrial gene expression at elevated temperatures and prevents heat-aggregation of the ribosomal subunit VAR1. In Saccharomyces cerevisiae (strain ATCC 204508 / S288c) (Baker's yeast), this protein is Mitochondrial chaperone TCM62 (TCM62).